The chain runs to 54 residues: Large ribosomal subunit protein bL32c (54 aa).

It belongs to the bacterial ribosomal protein bL32 family.

Its subcellular location is the plastid. The protein localises to the chloroplast. The polypeptide is Large ribosomal subunit protein bL32c (Lactuca sativa (Garden lettuce)).